The primary structure comprises 146 residues: Cytochrome c oxidase subunit 5A, mitochondrial (146 aa).

A mitochondrion-targeting transit peptide spans 1-37; it reads MLAAALRRCTAAAAARGLLHPVSAPSPAAAVCSIRCY. Residues 2-16 carry the SIFI-degron motif; that stretch reads LAAALRRCTAAAAAR. 2 positions are modified to N6-acetyllysine: K83 and K109. The residue at position 137 (T137) is a Phosphothreonine.

Component of the cytochrome c oxidase (complex IV, CIV), a multisubunit enzyme composed of 14 subunits. The complex is composed of a catalytic core of 3 subunits MT-CO1, MT-CO2 and MT-CO3, encoded in the mitochondrial DNA, and 11 supernumerary subunits COX4I, COX5A, COX5B, COX6A, COX6B, COX6C, COX7A, COX7B, COX7C, COX8 and NDUFA4, which are encoded in the nuclear genome. The complex exists as a monomer or a dimer and forms supercomplexes (SCs) in the inner mitochondrial membrane with NADH-ubiquinone oxidoreductase (complex I, CI) and ubiquinol-cytochrome c oxidoreductase (cytochrome b-c1 complex, complex III, CIII), resulting in different assemblies (supercomplex SCI(1)III(2)IV(1) and megacomplex MCI(2)III(2)IV(2)). Interacts with AFG1L. Interacts with RAB5IF. Post-translationally, in response to mitochondrial stress, the precursor protein is ubiquitinated by the SIFI complex in the cytoplasm before mitochondrial import, leading to its degradation. Within the SIFI complex, UBR4 initiates ubiquitin chain that are further elongated or branched by KCMF1. As to expression, expressed in the head of epididymal sperm but not in testicular sperm (at protein level).

It localises to the mitochondrion inner membrane. The protein operates within energy metabolism; oxidative phosphorylation. Component of the cytochrome c oxidase, the last enzyme in the mitochondrial electron transport chain which drives oxidative phosphorylation. The respiratory chain contains 3 multisubunit complexes succinate dehydrogenase (complex II, CII), ubiquinol-cytochrome c oxidoreductase (cytochrome b-c1 complex, complex III, CIII) and cytochrome c oxidase (complex IV, CIV), that cooperate to transfer electrons derived from NADH and succinate to molecular oxygen, creating an electrochemical gradient over the inner membrane that drives transmembrane transport and the ATP synthase. Cytochrome c oxidase is the component of the respiratory chain that catalyzes the reduction of oxygen to water. Electrons originating from reduced cytochrome c in the intermembrane space (IMS) are transferred via the dinuclear copper A center (CU(A)) of subunit 2 and heme A of subunit 1 to the active site in subunit 1, a binuclear center (BNC) formed by heme A3 and copper B (CU(B)). The BNC reduces molecular oxygen to 2 water molecules using 4 electrons from cytochrome c in the IMS and 4 protons from the mitochondrial matrix. The chain is Cytochrome c oxidase subunit 5A, mitochondrial (Cox5a) from Rattus norvegicus (Rat).